Reading from the N-terminus, the 222-residue chain is Methionine import system permease protein MetP (222 aa).

The region spanning 18–212 (TYETLYMTLI…IIVFIIQIIG (195 aa)) is the ABC transmembrane type-1 domain. Transmembrane regions (helical) follow at residues 25 to 45 (TLIS…LLFL), 73 to 93 (FLIL…TILG), 97 to 117 (ALPA…EIAL), 152 to 172 (ISGI…AGAI), and 195 to 215 (FVAT…GDLI).

It belongs to the binding-protein-dependent transport system permease family. CysTW subfamily. As to quaternary structure, the complex is composed of two ATP-binding proteins (MetN), two transmembrane proteins (MetP) and a solute-binding protein (MetQ).

It localises to the cell membrane. Its function is as follows. Part of the ABC transporter complex MetNPQ involved in methionine import. Responsible for the translocation of the substrate across the membrane. It has also been shown to be involved in methionine sulfoxide transport. The polypeptide is Methionine import system permease protein MetP (metP) (Bacillus subtilis (strain 168)).